Consider the following 541-residue polypeptide: Atlastin-3 (541 aa).

The disordered stretch occupies residues 1-22 (MLSPQRTAAVASRGAGDAMENG). Positions 1 to 25 (MLSPQRTAAVASRGAGDAMENGKPG) are N-terminal hypervariable region (HVR). Topologically, residues 1 to 445 (MLSPQRTAAV…NVFSTFRTPA (445 aa)) are cytoplasmic. Positions 57–305 (DLDVVVVSVA…LIPYVLNPSK (249 aa)) constitute a GB1/RHD3-type G domain. Positions 70, 71, 72, 73, 74, 75, and 109 each coordinate GDP. Asp142 provides a ligand contact to Mg(2+). GDP contacts are provided by Arg213, Asp214, Val272, and Ser275. Positions 343-434 (MLQATAEANN…YENFCKHNGS (92 aa)) are 3HB (three-helix bundle) domain. N6-acetyllysine is present on Lys391. Residues 446 to 466 (VLFTGIAALYIASGFTGFIGL) form a helical membrane-spanning segment. Position 467 (Glu467) is a topological domain, lumenal. Residues 468–488 (VVAQLFNCMVGLLLIALLTWG) form a helical membrane-spanning segment. At 489 to 541 (YIRYSGQYRELGGAIDSGAAYVLEQASSHIGNSTQAAVRDAVVGRPPADKKSQ) the chain is on the cytoplasmic side.

It belongs to the TRAFAC class dynamin-like GTPase superfamily. GB1/RHD3 GTPase family. GB1 subfamily. In terms of assembly, monomeric and homodimeric. The homodimer, transiently formed by two molecules on opposing membranes, is the active form mediating ER membrane fusion. Interacts with ZFYVE27; both proteins are involved in endoplasmic reticulum tubular network organization. Interacts with REEP5; both proteins are involved in endoplasmic reticulum tubular network organization. In terms of tissue distribution, expressed in cardiomyocytes (at protein level).

The protein localises to the endoplasmic reticulum membrane. The catalysed reaction is GTP + H2O = GDP + phosphate + H(+). In terms of biological role, atlastin-3 (ATL3) is a membrane-anchored GTPase that mediates the GTP-dependent fusion of endoplasmic reticulum (ER) membranes, maintaining the continuous ER network. It facilitates the formation of three-way junctions where ER tubules intersect. Two atlastin-3 on neighboring ER tubules bind GTP and form loose homodimers through the GB1/RHD3-type G domains and 3HB regions. Upon GTP hydrolysis, the 3HB regions tighten, pulling the membranes together to drive their fusion. After fusion, the homodimer disassembles upon release of inorganic phosphate (Pi). Subsequently, GDP dissociates, resetting the monomers to a conformation ready for a new fusion cycle. This is Atlastin-3 from Mus musculus (Mouse).